The primary structure comprises 798 residues: Integrin beta-1 (798 aa).

The first 20 residues, 1 to 20 (MNLQLIFWIGLISSVCYVFG), serve as a signal peptide directing secretion. Over 21–728 (QADENRCLKA…ETPECPTGPD (708 aa)) the chain is Extracellular. Residues 26–76 (RCLKANAKSCGECIQAGPNCGWCTNSTFLQEGMPTSARCDDLEALRKKGCH) form the PSI domain. 28 disulfides stabilise this stretch: Cys27–Cys45, Cys35–Cys464, Cys38–Cys64, Cys48–Cys75, Cys207–Cys213, Cys261–Cys301, Cys401–Cys415, Cys435–Cys462, Cys466–Cys486, Cys477–Cys489, Cys491–Cys500, Cys502–Cys533, Cys516–Cys531, Cys525–Cys536, Cys538–Cys553, Cys555–Cys576, Cys560–Cys574, Cys568–Cys579, Cys581–Cys590, Cys592–Cys615, Cys599–Cys613, Cys607–Cys618, Cys620–Cys630, Cys633–Cys636, Cys640–Cys691, Cys646–Cys665, Cys649–Cys661, and Cys699–Cys723. The N-linked (GlcNAc...) asparagine glycan is linked to Asn50. Over residues 75 to 84 (CHPDDIENPR) the composition is skewed to basic and acidic residues. A disordered region spans residues 75-107 (CHPDDIENPRGSKNIKKNKNVTNRSKGTAEKLQ). N-linked (GlcNAc...) asparagine glycosylation is found at Asn94 and Asn97. Residues 140–378 (DYPIDLYYLM…QLIIDAYNSL (239 aa)) form the VWFA domain. The Mg(2+) site is built by Ser152 and Ser154. Positions 154, 157, 158, and 189 each coordinate Ca(2+). Residues 207-213 (CTSEQNC) are CX3CL1-binding. Asn212 is a glycosylation site (N-linked (GlcNAc...) asparagine). Residues Asn244, Asp246, Pro248, and Glu249 each coordinate Ca(2+). Glu249 lines the Mg(2+) pocket. Asn269 carries N-linked (GlcNAc...) asparagine glycosylation. Residues 295–314 (LPNDGHCHLENDVYTMSHYY) are CX3CL1-binding. Ala362 serves as a coordination point for Ca(2+). Asn363, Asn406, and Asn417 each carry an N-linked (GlcNAc...) asparagine glycan. Positions 383–465 (ILENSKLPEG…IILQFICECE (83 aa)) are interaction with TMEM182. I-EGF domains lie at 466–501 (CQSE…RHCE), 502–554 (CSTD…KFCE), 555–591 (CDNF…SACD), and 592–631 (CSLD…PTCE). Asn481 carries N-linked (GlcNAc...) asparagine glycosylation. N-linked (GlcNAc...) asparagine glycosylation occurs at Asn520. Asn584 carries an N-linked (GlcNAc...) asparagine glycan. N-linked (GlcNAc...) asparagine glycosylation is present at Asn669. A helical membrane pass occupies residues 729–749 (IIPIVAGVVAGIVLIGLALLL). Residues 750-798 (IWKLLMIIHDRREFAKFEKEKMNAKWDTGENPIYKSAVTTVVNPKYEGK) are Cytoplasmic-facing. A signal for sorting from recycling endosomes; interaction with ACAP1 region spans residues 762–767 (EFAKFE). A Phosphothreonine modification is found at Thr777. Tyr783 bears the Phosphotyrosine mark. Residue Ser785 is modified to Phosphoserine. An interaction with ITGB1BP1 region spans residues 785–792 (SAVTTVVN). Thr789 carries the post-translational modification Phosphothreonine. N6-acetyllysine; alternate is present on Lys794. Lys794 is covalently cross-linked (Glycyl lysine isopeptide (Lys-Gly) (interchain with G-Cter in SUMO1); alternate).

This sequence belongs to the integrin beta chain family. Interacts with seprase FAP (seprase); the interaction occurs at the cell surface of invadopodia membrane in a collagen-dependent manner. Heterodimer of an alpha and a beta subunit. Beta-1 associates with either alpha-1, alpha-2, alpha-3, alpha-4, alpha-5, alpha-6, alpha-7, alpha-8, alpha-9, alpha-10, alpha-11 or alpha-V. ITGA6:ITGB1 is found in a complex with CD9; interaction takes place in oocytes and is involved in sperm-egg fusion. Binds LGALS3BP and NMRK2, when associated with alpha-7, but not with alpha-5. Interacts with FLNA, FLNB, FLNC and RANBP9. Interacts with KRT1 in the presence of RACK1 and SRC. Interacts with JAML; integrin alpha-4/beta-1 may regulate leukocyte to endothelial cells adhesion by controlling JAML homodimerization. Interacts with RAB21. Interacts (via the cytoplasmic region) with RAB25 (via the hypervariable C-terminal region). Interacts with MYO10. Interacts with ITGB1BP1 (via C-terminal region); the interaction is a prerequisite for focal adhesion disassembly. Interacts with TLN1; the interaction is prevented by competitive binding of ITGB1BP1. Interacts with ACAP1; required for ITGB1 recycling. Interacts with ASAP3. Interacts with FERMT2; the interaction is inhibited in presence of ITGB1BP1. Interacts with DAB2. Interacts with FGR and HCK. Interacts with alpha-7A and alpha-7B in adult skeletal muscle. Interacts with alpha-7B in cardiomyocytes of adult heart. Interacts with EMP2; the interaction may be direct or indirect and ITGB1 has a heterodimer form. ITGA5:ITGB1 interacts with CCN3. ITGA4:ITGB1 is found in a ternary complex with CX3CR1 and CX3CL1. ITGA5:ITGB1 interacts with FBN1. ITGA5:ITGB1 interacts with IL1B. Interacts with MDK. ITGA4:ITGB1 interacts with MDK; this interaction mediates MDK-induced osteoblast cells migration through PXN phosphorylation. ITGA6:ITGB1 interacts with MDK; this interaction mediates MDK-induced neurite-outgrowth. ITGA5:ITGB1 interacts with ACE2. Interacts with TMEM182 and LAMB1. Interacts with tensin TNS3; TNS3 also interacts with PEAK1, thus acting as an adapter molecule to bridge the association of PEAK1 with ITGB1. Interacts with tensin TNS4; the interaction displaces tensin TNS3 from the ITGB1 cytoplasmic tail and promotes ITGB1 stability. Integrin ITGA9:ITGB1 interacts with SPP1/OPN (via N-terminus). Integrin ITGA9:ITGB1 interacts with TNC/TNFN3 (via the 3rd Fibronectin type-III domain). Integrins ITGA4:ITGB1 and ITGA9:ITGB1 interact with SVEP1 (via Sushi domain 21); thereby inhibit Ca(2+) intracellular signaling and as a result repress vasocontraction. ITGA4:ITGB1 and ITGA5:ITGB1 interacts with SELP. Interacts with CD248. ITGA5:ITGB1 interacts with IGFBP1. ITGA4:ITGB1 interacts with BCAM. Interacts with ADGRG6. In terms of tissue distribution, expressed in the spleen, thymus, alveolar macrophages, bone marrow, liver and kidney.

Its subcellular location is the cell membrane. The protein localises to the cell projection. The protein resides in the invadopodium membrane. It is found in the ruffle membrane. It localises to the recycling endosome. Its subcellular location is the melanosome. The protein localises to the lamellipodium. The protein resides in the ruffle. It is found in the cell junction. It localises to the focal adhesion. In terms of biological role, integrins alpha-1/beta-1, alpha-2/beta-1, alpha-10/beta-1 and alpha-11/beta-1 are receptors for collagen. Integrins alpha-1/beta-1 and alpha-2/beta-2 recognize the proline-hydroxylated sequence G-F-P-G-E-R in collagen. Integrins alpha-2/beta-1, alpha-3/beta-1, alpha-4/beta-1, alpha-5/beta-1, alpha-8/beta-1, alpha-10/beta-1, alpha-11/beta-1 and alpha-V/beta-1 are receptors for fibronectin. Alpha-4/beta-1 recognizes one or more domains within the alternatively spliced CS-1 and CS-5 regions of fibronectin. Integrin alpha-5/beta-1 is a receptor for fibrinogen. Integrin alpha-1/beta-1, alpha-2/beta-1, alpha-6/beta-1 and alpha-7/beta-1 are receptors for lamimin. Integrin alpha-6/beta-1 (ITGA6:ITGB1) is present in oocytes and is involved in sperm-egg fusion. Integrin alpha-4/beta-1 is a receptor for VCAM1 and recognizes the sequence Q-I-D-S in VCAM1. Integrin alpha-9/beta-1 is a receptor for VCAM1, cytotactin and osteopontin. It recognizes the sequence A-E-I-D-G-I-E-L in cytotactin. Integrin alpha-3/beta-1 is a receptor for epiligrin, thrombospondin and CSPG4. Integrin alpha-3/beta-1 provides a docking site for FAP (seprase) at invadopodia plasma membranes in a collagen-dependent manner and hence may participate in the adhesion, formation of invadopodia and matrix degradation processes, promoting cell invasion. Alpha-3/beta-1 may mediate with LGALS3 the stimulation by CSPG4 of endothelial cells migration. Integrin alpha-V/beta-1 is a receptor for vitronectin. Beta-1 integrins recognize the sequence R-G-D in a wide array of ligands. When associated with alpha-7/beta-1 integrin, regulates cell adhesion and laminin matrix deposition. Involved in promoting endothelial cell motility and angiogenesis. Involved in osteoblast compaction through the fibronectin fibrillogenesis cell-mediated matrix assembly process and the formation of mineralized bone nodules. May be involved in up-regulation of the activity of kinases such as PKC via binding to KRT1. Together with KRT1 and RACK1, serves as a platform for SRC activation or inactivation. Plays a mechanistic adhesive role during telophase, required for the successful completion of cytokinesis. ITGA4:ITGB1 binds to fractalkine (CX3CL1) and may act as its coreceptor in CX3CR1-dependent fractalkine signaling. ITGA4:ITGB1 and ITGA5:ITGB1 bind to PLA2G2A via a site (site 2) which is distinct from the classical ligand-binding site (site 1) and this induces integrin conformational changes and enhanced ligand binding to site 1. ITGA5:ITGB1 acts as a receptor for fibrillin-1 (FBN1) and mediates R-G-D-dependent cell adhesion to FBN1. ITGA5:ITGB1 acts as a receptor for fibronectin FN1 and mediates R-G-D-dependent cell adhesion to FN1. ITGA5:ITGB1 is a receptor for IL1B and binding is essential for IL1B signaling. ITGA5:ITGB3 is a receptor for soluble CD40LG and is required for CD40/CD40LG signaling. Plays an important role in myoblast differentiation and fusion during skeletal myogenesis. ITGA9:ITGB1 may play a crucial role in SVEP1/polydom-mediated myoblast cell adhesion. Integrins ITGA9:ITGB1 and ITGA4:ITGB1 repress PRKCA-mediated L-type voltage-gated channel Ca(2+) influx and ROCK-mediated calcium sensitivity in vascular smooth muscle cells via their interaction with SVEP1, thereby inhibit vasocontraction. The protein is Integrin beta-1 (ITGB1) of Sus scrofa (Pig).